We begin with the raw amino-acid sequence, 257 residues long: Phycoerythrobilin:ferredoxin oxidoreductase (257 aa).

This sequence belongs to the HY2 family.

The catalysed reaction is (3Z)-phycoerythrobilin + oxidized 2[4Fe-4S]-[ferredoxin] = 15,16-dihydrobiliverdin + reduced 2[4Fe-4S]-[ferredoxin] + 2 H(+). Its function is as follows. Catalyzes the two-electron reduction of the C2 and C3(1) diene system of 15,16-dihydrobiliverdin. The chain is Phycoerythrobilin:ferredoxin oxidoreductase from Synechococcus sp. (strain CC9902).